We begin with the raw amino-acid sequence, 450 residues long: Probable glycylpeptide N-tetradecanoyltransferase (450 aa).

Residues 1-28 are disordered; it reads MSHGHSHDGAPCGGHHGDDGAGGSRPSV. Tetradecanoyl-CoA-binding residues include Q67, F68, W69, F200, L201, C202, V203, S209, R211, V212, and A213.

It belongs to the NMT family.

It is found in the cytoplasm. The catalysed reaction is N-terminal glycyl-[protein] + tetradecanoyl-CoA = N-tetradecanoylglycyl-[protein] + CoA + H(+). In terms of biological role, adds a myristoyl group to the N-terminal glycine residue of certain cellular proteins. The sequence is that of Probable glycylpeptide N-tetradecanoyltransferase (nmt-1) from Caenorhabditis elegans.